We begin with the raw amino-acid sequence, 528 residues long: GMP synthase [glutamine-hydrolyzing] (528 aa).

Residues 22–212 (AILVLDFGSQ…VFKICQSQTN (191 aa)) form the Glutamine amidotransferase type-1 domain. Cys-99 acts as the Nucleophile in catalysis. Active-site residues include His-186 and Glu-188. Residues 213–403 (WSLESNVETI…LGIKKEALYR (191 aa)) form the GMPS ATP-PPase domain. 240 to 246 (SGGTDSL) serves as a coordination point for ATP.

Homodimer.

It catalyses the reaction XMP + L-glutamine + ATP + H2O = GMP + L-glutamate + AMP + diphosphate + 2 H(+). Its pathway is purine metabolism; GMP biosynthesis; GMP from XMP (L-Gln route): step 1/1. In terms of biological role, catalyzes the synthesis of GMP from XMP. The chain is GMP synthase [glutamine-hydrolyzing] from Borrelia garinii subsp. bavariensis (strain ATCC BAA-2496 / DSM 23469 / PBi) (Borreliella bavariensis).